The sequence spans 262 residues: Nodulation protein J (262 aa).

In terms of domain architecture, ABC transmembrane type-2 spans 33–259 (ASLLGNLADP…FASIALFRRR (227 aa)). A run of 7 helical transmembrane segments spans residues 37-57 (GNLADPITNLFGLGFGLGLIV), 64-84 (SYIAFLAAGMVAISAMTSATF), 102-122 (GILFTQLTLGDIVLGELVWAA), 125-145 (SVLAGTAIGIVAATLGYASWT), 149-169 (CAIPTIALTGLVFASLAMVVI), 177-197 (YFVFYQSLVLTPMVFLCGAVF), and 236-256 (LHVGALCVYAVLPFFASIALF).

Belongs to the ABC-2 integral membrane protein family. Lipooligosaccharide exporter (TC 3.A.1.102) subfamily. In terms of assembly, the complex is composed of two ATP-binding proteins (NodI) and two transmembrane proteins (NodJ).

The protein localises to the cell inner membrane. Part of the ABC transporter complex NodIJ involved in the export of the nodulation factors (Nod factors), the bacterial signal molecules that induce symbiosis and subsequent nodulation induction. Nod factors are LCO (lipo-chitin oligosaccharide), a modified beta-1,4-linked N-acetylglucosamine oligosaccharide. This subunit encodes the transporter. The chain is Nodulation protein J (nodJ) from Bradyrhizobium diazoefficiens (strain JCM 10833 / BCRC 13528 / IAM 13628 / NBRC 14792 / USDA 110).